A 397-amino-acid chain; its full sequence is Phosphoglycerate kinase (397 aa).

Substrate-binding positions include 21–23, arginine 36, 59–62, arginine 119, and arginine 152; these read DVN and HFGR. Residues lysine 202, glutamate 324, and 354–357 each bind ATP; that span reads GGDT.

The protein belongs to the phosphoglycerate kinase family. In terms of assembly, monomer.

It localises to the cytoplasm. The catalysed reaction is (2R)-3-phosphoglycerate + ATP = (2R)-3-phospho-glyceroyl phosphate + ADP. Its pathway is carbohydrate degradation; glycolysis; pyruvate from D-glyceraldehyde 3-phosphate: step 2/5. The sequence is that of Phosphoglycerate kinase from Cereibacter sphaeroides (strain ATCC 17029 / ATH 2.4.9) (Rhodobacter sphaeroides).